Reading from the N-terminus, the 79-residue chain is Protein S100-G (79 aa).

Ser-2 bears the N-acetylserine mark. 2 consecutive EF-hand domains span residues 13 to 48 and 45 to 79; these read IFEK…KGPS and KGPS…KISQ. Ca(2+)-binding residues include Gln-26 and Glu-31. Ser-42 is subject to Phosphoserine. Ca(2+) is bound by residues Asp-58, Asn-60, Asp-62, Glu-64, and Glu-69.

This sequence belongs to the S-100 family.

The polypeptide is Protein S100-G (S100G) (Bos taurus (Bovine)).